Consider the following 165-residue polypeptide: uncharacterized protein (165 aa).

Residues 1 to 36 (MTRLCLPRPEAREDPIPVPPRGLGAGEGSGSPVRPP) form a disordered region. A helical membrane pass occupies residues 135–155 (LLLLMGLGPLLRACGMPLTLL).

Its subcellular location is the membrane. This is an uncharacterized protein from Homo sapiens (Human).